Here is a 603-residue protein sequence, read N- to C-terminus: Elongation factor 4 (603 aa).

The 183-residue stretch at Ser-7 to Arg-189 folds into the tr-type G domain. Residues Asp-19–Thr-24 and Asn-136–Asp-139 each bind GTP.

The protein belongs to the TRAFAC class translation factor GTPase superfamily. Classic translation factor GTPase family. LepA subfamily.

It is found in the cell inner membrane. It catalyses the reaction GTP + H2O = GDP + phosphate + H(+). Required for accurate and efficient protein synthesis under certain stress conditions. May act as a fidelity factor of the translation reaction, by catalyzing a one-codon backward translocation of tRNAs on improperly translocated ribosomes. Back-translocation proceeds from a post-translocation (POST) complex to a pre-translocation (PRE) complex, thus giving elongation factor G a second chance to translocate the tRNAs correctly. Binds to ribosomes in a GTP-dependent manner. This is Elongation factor 4 from Thermosynechococcus vestitus (strain NIES-2133 / IAM M-273 / BP-1).